The following is a 755-amino-acid chain: Serine/threonine-protein kinase GL21140 (755 aa).

Residues 18–52 (QASASGSGTPKKTAASSAAAQNSKQLLDQLSQQQK) show a composition bias toward low complexity. The interval 18–128 (QASASGSGTP…GSANTNGSAS (111 aa)) is disordered. Basic and acidic residues-rich tracts occupy residues 53–66 (AQEE…RDCD) and 74–84 (EPEKDLDELRD). The segment covering 87 to 99 (GSLTGSGSVGKSN) has biased composition (polar residues). Residues 100-128 (GSLSGASSTTSAPAGTSTPGSANTNGSAS) are compositionally biased toward low complexity. Doublecortin domains are found at residues 157–243 (HRIK…VDYN) and 314–397 (RIVT…VDDF). One can recognise a Protein kinase domain in the interval 484–742 (YTLSQIIGDG…SEDILDHYWT (259 aa)). ATP is bound by residues 490–498 (IGDGNFAIV) and Lys513. Asp605 serves as the catalytic Proton acceptor.

This sequence belongs to the protein kinase superfamily. CAMK Ser/Thr protein kinase family. CaMK subfamily.

It carries out the reaction L-seryl-[protein] + ATP = O-phospho-L-seryl-[protein] + ADP + H(+). The enzyme catalyses L-threonyl-[protein] + ATP = O-phospho-L-threonyl-[protein] + ADP + H(+). This is Serine/threonine-protein kinase GL21140 from Drosophila persimilis (Fruit fly).